We begin with the raw amino-acid sequence, 877 residues long: Phosphoenolpyruvate carboxylase (877 aa).

Active-site residues include H138 and K543.

Belongs to the PEPCase type 1 family. It depends on Mg(2+) as a cofactor.

The catalysed reaction is oxaloacetate + phosphate = phosphoenolpyruvate + hydrogencarbonate. Forms oxaloacetate, a four-carbon dicarboxylic acid source for the tricarboxylic acid cycle. The polypeptide is Phosphoenolpyruvate carboxylase (Aeromonas salmonicida (strain A449)).